We begin with the raw amino-acid sequence, 102 residues long: Complement inhibitor RaCI3 (102 aa).

The N-terminal stretch at methionine 1 to serine 24 is a signal peptide. 3 disulfides stabilise this stretch: cysteine 37-cysteine 61, cysteine 42-cysteine 63, and cysteine 57-cysteine 78.

This sequence belongs to the RaCI family. As to expression, expressed in salivary glands.

Its subcellular location is the secreted. Complement inhibitor. Prevents complement-mediated C5 activation by binding to C5. Binds C5 at a different binding site than the other tick complement inhibitors OmCI and CirpT1, and the drug eculizumab. Inhibits complement in human and guinea pig but not in other species tested (rabbit, rat, mouse, and pig). The chain is Complement inhibitor RaCI3 from Dermacentor andersoni (Rocky mountain wood tick).